The primary structure comprises 100 residues: Urease subunit gamma (100 aa).

This sequence belongs to the urease gamma subunit family. As to quaternary structure, heterotrimer of UreA (gamma), UreB (beta) and UreC (alpha) subunits. Three heterotrimers associate to form the active enzyme.

The protein resides in the cytoplasm. It catalyses the reaction urea + 2 H2O + H(+) = hydrogencarbonate + 2 NH4(+). It participates in nitrogen metabolism; urea degradation; CO(2) and NH(3) from urea (urease route): step 1/1. The protein is Urease subunit gamma of Verminephrobacter eiseniae (strain EF01-2).